Reading from the N-terminus, the 300-residue chain is Energy-coupling factor transporter ATP-binding protein EcfA2 (300 aa).

The ABC transporter domain maps to 3–258 (IKAKNIVKIY…NKFLIENKML (256 aa)). 40-47 (GQTGSGKT) provides a ligand contact to ATP.

Belongs to the ABC transporter superfamily. Energy-coupling factor EcfA family. In terms of assembly, forms a stable energy-coupling factor (ECF) transporter complex composed of 2 membrane-embedded substrate-binding proteins (S component), 2 ATP-binding proteins (A component) and 2 transmembrane proteins (T component).

It is found in the cell membrane. Its function is as follows. ATP-binding (A) component of a common energy-coupling factor (ECF) ABC-transporter complex. Unlike classic ABC transporters this ECF transporter provides the energy necessary to transport a number of different substrates. In Mesomycoplasma hyopneumoniae (strain 7448) (Mycoplasma hyopneumoniae), this protein is Energy-coupling factor transporter ATP-binding protein EcfA2.